The chain runs to 126 residues: MNFPQNVKYTNEHEWIRLEGDVAYVGITDYAQEQLGDIVFVDIPTEGETLEAEEVFGTIEVVKTISDLFLPVAGEVVEQNPALEENPELVNKDPYGEGWLIKMKPANAADLDNLLDAEGYKAVVNA.

The 83-residue stretch at 22-104 (VAYVGITDYA…YGEGWLIKMK (83 aa)) folds into the Lipoyl-binding domain. Lys-63 is subject to N6-lipoyllysine.

Belongs to the GcvH family. As to quaternary structure, the glycine cleavage system is composed of four proteins: P, T, L and H. Requires (R)-lipoate as cofactor.

Functionally, the glycine cleavage system catalyzes the degradation of glycine. The H protein shuttles the methylamine group of glycine from the P protein to the T protein. In Bacteroides fragilis (strain YCH46), this protein is Glycine cleavage system H protein.